The chain runs to 103 residues: Large ribosomal subunit protein bL21 (103 aa).

Belongs to the bacterial ribosomal protein bL21 family. As to quaternary structure, part of the 50S ribosomal subunit. Contacts protein L20.

Its function is as follows. This protein binds to 23S rRNA in the presence of protein L20. This chain is Large ribosomal subunit protein bL21, found in Mycobacterium sp. (strain JLS).